Reading from the N-terminus, the 189-residue chain is Auxin-responsive protein IAA6 (189 aa).

An EAR-like (transcriptional repression) motif is present at residues 13–17 (LRLGL). A PB1 domain is found at 93–178 (IGYVKVSMDG…SCKRLRIVKR (86 aa)).

This sequence belongs to the Aux/IAA family. In terms of assembly, homodimers and heterodimers. Interacts with TPL. As to expression, highly expressed in stems and flowers.

It localises to the nucleus. In terms of biological role, aux/IAA proteins are short-lived transcriptional factors that function as repressors of early auxin response genes at low auxin concentrations. Repression is thought to result from the interaction with auxin response factors (ARFs), proteins that bind to the auxin-responsive promoter element (AuxRE). Formation of heterodimers with ARF proteins may alter their ability to modulate early auxin response genes expression. This chain is Auxin-responsive protein IAA6 (IAA6), found in Arabidopsis thaliana (Mouse-ear cress).